A 326-amino-acid chain; its full sequence is tRNA-modifying protein YgfZ (326 aa).

Folate contacts are provided by Trp-27 and Trp-189.

Belongs to the tRNA-modifying YgfZ family.

It is found in the cytoplasm. In terms of biological role, folate-binding protein involved in regulating the level of ATP-DnaA and in the modification of some tRNAs. It is probably a key factor in regulatory networks that act via tRNA modification, such as initiation of chromosomal replication. This chain is tRNA-modifying protein YgfZ, found in Salmonella typhimurium (strain LT2 / SGSC1412 / ATCC 700720).